We begin with the raw amino-acid sequence, 62 residues long: Photosystem II reaction center protein Z (62 aa).

Transmembrane regions (helical) follow at residues 8 to 28 (ALAALVALSFLMVIGVPVAYA) and 41 to 61 (FVGSIAWTVLVIAVGVLNFFV).

Belongs to the PsbZ family. PSII is composed of 1 copy each of membrane proteins PsbA, PsbB, PsbC, PsbD, PsbE, PsbF, PsbH, PsbI, PsbJ, PsbK, PsbL, PsbM, PsbT, PsbX, PsbY, PsbZ, Psb30/Ycf12, peripheral proteins PsbO, CyanoQ (PsbQ), PsbU, PsbV and a large number of cofactors. It forms dimeric complexes.

It is found in the cellular thylakoid membrane. May control the interaction of photosystem II (PSII) cores with the light-harvesting antenna, regulates electron flow through the 2 photosystem reaction centers. PSII is a light-driven water plastoquinone oxidoreductase, using light energy to abstract electrons from H(2)O, generating a proton gradient subsequently used for ATP formation. The polypeptide is Photosystem II reaction center protein Z (Picosynechococcus sp. (strain ATCC 27264 / PCC 7002 / PR-6) (Agmenellum quadruplicatum)).